A 962-amino-acid polypeptide reads, in one-letter code: Ubiquitin carboxyl-terminal hydrolase 4 (962 aa).

The 112-residue stretch at 11–122 (PDVETQKTEL…GQQPIVRKVV (112 aa)) folds into the DUSP domain. The interval 27 to 216 (TLQRGAQWYL…LYQGQVLVIE (190 aa)) is necessary for interaction with SART3. The short motif at 133–141 (VEVYLLELK) is the Nuclear export signal element. One can recognise a Ubiquitin-like 1 domain in the interval 142–226 (LCENSDPTNV…PQNEDGTWPR (85 aa)). Residues 220–249 (EDGTWPRQSLQSKSSTAPSRNFTTSSKPSA) are disordered. The segment covering 225–249 (PRQSLQSKSSTAPSRNFTTSSKPSA) has biased composition (polar residues). The tract at residues 229 to 295 (LQSKSSTAPS…SYNCQEPPSP (67 aa)) is required for USP4 activation by providing conformational flexibility between the DUSP and catalytic domains. The 621-residue stretch at 302-922 (CGLGNLGNTC…AAYVLFYQRR (621 aa)) folds into the USP domain. Residue Cys-311 is the Nucleophile of the active site. Residues 384–386 (PQF) form a regulates ubiquitin dissociation region. The segment at 405–407 (LHE) is necessary for interaction with RBL2. Position 445 is a phosphoserine (Ser-445). Residues 459–463 (LVCPE) form a necessary for interaction with RB1 and RBL2 region. 2 residues coordinate Zn(2+): Cys-461 and Cys-464. The Ubiquitin-like 2 domain occupies 483–571 (LKKDRIMEVF…IFVYEVCNTS (89 aa)). The interacts with DUSP and ubiquitin-like 1 domains and is required for USP4 activation stretch occupies residues 485–774 (KDRIMEVFLV…SQPQKKKKAA (290 aa)). Residues 638–699 (EFLSSPLEPG…SESAQKVKGQ (62 aa)) form a disordered region. Ser-655 bears the Phosphoserine mark. Residues 657–666 (EGDEEEEMDH) show a composition bias toward acidic residues. Ser-675 and Ser-680 each carry phosphoserine. The Nuclear localization signal signature appears at 766–771 (QPQKKK). Residues Cys-798 and Cys-801 each coordinate Zn(2+). The Proton acceptor role is filled by His-880. Over residues 928–937 (STSSLGSFPG) the composition is skewed to low complexity. The tract at residues 928-962 (STSSLGSFPGSDGGVKLSSSHQGMGDEEAYNMDTN) is disordered. Over residues 952–962 (GDEEAYNMDTN) the composition is skewed to acidic residues.

This sequence belongs to the peptidase C19 family. USP4 subfamily. Interacts with RB1 (both dephosphorylated and hypophosphorylated forms). Interacts with RBL1 and RBL2. Interacts with ADORA2A (via cytoplasmic C-terminus); the interaction is direct. Interacts with SART3; recruits USP4 to its substrate PRPF3. Post-translationally, phosphorylated at Ser-445 by PKB/AKT1 in response to EGF stimulus, promoting its ability deubiquitinate RHEB. In terms of processing, monoubiquitinated by TRIM21. Ubiquitination does not lead to its proteasomal degradation. Autodeubiquitinated. Expressed in brain, kidney, liver and spleen (at protein level).

It localises to the cytoplasm. It is found in the nucleus. The catalysed reaction is Thiol-dependent hydrolysis of ester, thioester, amide, peptide and isopeptide bonds formed by the C-terminal Gly of ubiquitin (a 76-residue protein attached to proteins as an intracellular targeting signal).. With respect to regulation, the completion of the deubiquitinase reaction is mediated by the DUSP and ubiquitin-like 1 domains which promotes the release of ubiquitin from the catalytic site enabling subsequent reactions to occur. In terms of biological role, deubiquitinating enzyme that removes conjugated ubiquitin from target proteins. Deubiquitinates PDPK1. Deubiquitinates TRIM21. Deubiquitinates receptor ADORA2A which increases the amount of functional receptor at the cell surface. Deubiquitinates HAS2. Deubiquitinates RHEB in response to EGF signaling, promoting mTORC1 signaling. May regulate mRNA splicing through deubiquitination of the U4 spliceosomal protein PRPF3. This may prevent its recognition by the U5 component PRPF8 thereby destabilizing interactions within the U4/U6.U5 snRNP. May also play a role in the regulation of quality control in the ER. The polypeptide is Ubiquitin carboxyl-terminal hydrolase 4 (Usp4) (Mus musculus (Mouse)).